Consider the following 89-residue polypeptide: Bacterial microcompartment shell vertex protein GrpN (89 aa).

The 83-residue stretch at methionine 1–aspartate 83 folds into the BMV domain.

It belongs to the CcmL/EutN family. In terms of assembly, homopentamer with a small central pore.

It localises to the bacterial microcompartment. Functionally, probably forms vertices in the bacterial microcompartment (BMC) predicted to be involved in glycyl radical-based 1,2-propanediol metabolism in this organism. This chain is Bacterial microcompartment shell vertex protein GrpN, found in Rhodospirillum rubrum (strain F11).